Here is a 295-residue protein sequence, read N- to C-terminus: UTP--glucose-1-phosphate uridylyltransferase (295 aa).

The protein belongs to the UDPGP type 2 family.

The catalysed reaction is alpha-D-glucose 1-phosphate + UTP + H(+) = UDP-alpha-D-glucose + diphosphate. May play a role in stationary phase survival. In Haemophilus ducreyi (strain 35000HP / ATCC 700724), this protein is UTP--glucose-1-phosphate uridylyltransferase (galU).